Reading from the N-terminus, the 248-residue chain is NAD-dependent protein deacylase 2 (248 aa).

Positions methionine 1–isoleucine 248 constitute a Deacetylase sirtuin-type domain. Residues glycine 19 to tyrosine 38 and glutamine 102 to aspartate 105 contribute to the NAD(+) site. Histidine 122 (proton acceptor) is an active-site residue. Zn(2+)-binding residues include cysteine 130, cysteine 133, cysteine 152, and cysteine 155. NAD(+)-binding positions include glycine 193 to threonine 195, asparagine 219 to glutamine 221, and alanine 237.

It belongs to the sirtuin family. Class III subfamily. Zn(2+) serves as cofactor.

It localises to the cytoplasm. It catalyses the reaction N(6)-acetyl-L-lysyl-[protein] + NAD(+) + H2O = 2''-O-acetyl-ADP-D-ribose + nicotinamide + L-lysyl-[protein]. Its function is as follows. NAD-dependent protein deacetylase which modulates the activities of several proteins which are inactive in their acetylated form. The chain is NAD-dependent protein deacylase 2 (cobB2) from Pseudomonas syringae pv. tomato (strain ATCC BAA-871 / DC3000).